Reading from the N-terminus, the 151-residue chain is Ubiquitin-conjugating enzyme E2 2 (151 aa).

The segment at 1–26 (MSTSARRRLMRDFKRMQTDPPAGVSA) is disordered. Positions 4–150 (SARRRLMRDF…VRETVEKSWE (147 aa)) constitute a UBC core domain. Cysteine 88 functions as the Glycyl thioester intermediate in the catalytic mechanism.

This sequence belongs to the ubiquitin-conjugating enzyme family.

The protein resides in the cytoplasm. Its subcellular location is the nucleus. It catalyses the reaction S-ubiquitinyl-[E1 ubiquitin-activating enzyme]-L-cysteine + [E2 ubiquitin-conjugating enzyme]-L-cysteine = [E1 ubiquitin-activating enzyme]-L-cysteine + S-ubiquitinyl-[E2 ubiquitin-conjugating enzyme]-L-cysteine.. The protein operates within protein modification; protein ubiquitination. Functionally, catalyzes the covalent attachment of ubiquitin to other proteins. Plays a role in transcription regulation by catalyzing the monoubiquitination of histone H2B to form H2BK123ub1. H2BK123ub1 gives a specific tag for epigenetic transcriptional activation and is also a prerequisite for H3K4me and H3K79me formation. Also involved in postreplication repair of UV-damaged DNA, in N-end rule-dependent protein degradation and in sporulation. The polypeptide is Ubiquitin-conjugating enzyme E2 2 (ubc2) (Aspergillus fumigatus (strain ATCC MYA-4609 / CBS 101355 / FGSC A1100 / Af293) (Neosartorya fumigata)).